Consider the following 105-residue polypeptide: Gene product 16.8 (105 aa).

It belongs to the phi29likevirus gp16.8 family.

This Bacillus phage phi29 (Bacteriophage phi-29) protein is Gene product 16.8 (16.8).